A 199-amino-acid polypeptide reads, in one-letter code: Recombination protein RecR (199 aa).

Residues 58–73 (CSVCSNLTDIDPCPLC) form a C4-type zinc finger. The region spanning 81–176 (TVICVVQDPR…KATRIAHGIP (96 aa)) is the Toprim domain.

This sequence belongs to the RecR family.

Its function is as follows. May play a role in DNA repair. It seems to be involved in an RecBC-independent recombinational process of DNA repair. It may act with RecF and RecO. The sequence is that of Recombination protein RecR from Ruminiclostridium cellulolyticum (strain ATCC 35319 / DSM 5812 / JCM 6584 / H10) (Clostridium cellulolyticum).